The sequence spans 352 residues: Protein-glutamate methylesterase/protein-glutamine glutaminase 2 (352 aa).

The Response regulatory domain occupies methionine 1–glutamate 116. A 4-aspartylphosphate modification is found at aspartate 50. Positions alanine 162–glutamine 352 constitute a CheB-type methylesterase domain. Active-site residues include serine 174, histidine 200, and aspartate 296.

The protein belongs to the CheB family. Phosphorylated by CheA. Phosphorylation of the N-terminal regulatory domain activates the methylesterase activity.

It localises to the cytoplasm. It catalyses the reaction [protein]-L-glutamate 5-O-methyl ester + H2O = L-glutamyl-[protein] + methanol + H(+). The catalysed reaction is L-glutaminyl-[protein] + H2O = L-glutamyl-[protein] + NH4(+). Its function is as follows. Involved in chemotaxis. Part of a chemotaxis signal transduction system that modulates chemotaxis in response to various stimuli. Catalyzes the demethylation of specific methylglutamate residues introduced into the chemoreceptors (methyl-accepting chemotaxis proteins or MCP) by CheR. Also mediates the irreversible deamidation of specific glutamine residues to glutamic acid. This is Protein-glutamate methylesterase/protein-glutamine glutaminase 2 from Xanthomonas campestris pv. campestris (strain ATCC 33913 / DSM 3586 / NCPPB 528 / LMG 568 / P 25).